Consider the following 339-residue polypeptide: Quinolinate synthase (339 aa).

Positions 63 and 81 each coordinate iminosuccinate. C126 lines the [4Fe-4S] cluster pocket. Iminosuccinate-binding positions include 152 to 154 (YVN) and S169. [4Fe-4S] cluster is bound at residue C211. Residues 237-239 (HPE) and T254 each bind iminosuccinate. C297 lines the [4Fe-4S] cluster pocket.

This sequence belongs to the quinolinate synthase family. Type 2 subfamily. It depends on [4Fe-4S] cluster as a cofactor.

It localises to the cytoplasm. It catalyses the reaction iminosuccinate + dihydroxyacetone phosphate = quinolinate + phosphate + 2 H2O + H(+). Its pathway is cofactor biosynthesis; NAD(+) biosynthesis; quinolinate from iminoaspartate: step 1/1. Catalyzes the condensation of iminoaspartate with dihydroxyacetone phosphate to form quinolinate. The polypeptide is Quinolinate synthase (Xylella fastidiosa (strain Temecula1 / ATCC 700964)).